Reading from the N-terminus, the 131-residue chain is Small ribosomal subunit protein uS8 (131 aa).

It belongs to the universal ribosomal protein uS8 family. Part of the 30S ribosomal subunit. Contacts proteins S5 and S12.

One of the primary rRNA binding proteins, it binds directly to 16S rRNA central domain where it helps coordinate assembly of the platform of the 30S subunit. The chain is Small ribosomal subunit protein uS8 from Ralstonia pickettii (strain 12J).